We begin with the raw amino-acid sequence, 207 residues long: Recombination protein RecR (207 aa).

The segment at 60–75 adopts a C4-type zinc-finger fold; it reads CRHCHNISDSDVCTIC. Residues 83–178 form the Toprim domain; sequence STLCVVENIR…RVSVIARGIA (96 aa).

Belongs to the RecR family.

Functionally, may play a role in DNA repair. It seems to be involved in an RecBC-independent recombinational process of DNA repair. It may act with RecF and RecO. The sequence is that of Recombination protein RecR from Porphyromonas gingivalis (strain ATCC BAA-308 / W83).